Here is a 231-residue protein sequence, read N- to C-terminus: Orotidine 5'-phosphate decarboxylase (231 aa).

Residues aspartate 11, lysine 34, aspartate 61–threonine 70, threonine 117, arginine 179, glutamine 188, glycine 208, and arginine 209 contribute to the substrate site. Lysine 63 (proton donor) is an active-site residue.

The protein belongs to the OMP decarboxylase family. Type 1 subfamily. In terms of assembly, homodimer.

It catalyses the reaction orotidine 5'-phosphate + H(+) = UMP + CO2. The protein operates within pyrimidine metabolism; UMP biosynthesis via de novo pathway; UMP from orotate: step 2/2. Catalyzes the decarboxylation of orotidine 5'-monophosphate (OMP) to uridine 5'-monophosphate (UMP). The polypeptide is Orotidine 5'-phosphate decarboxylase (Streptococcus suis (strain 98HAH33)).